A 440-amino-acid chain; its full sequence is FAD-dependent monooxygenase FVEG_08293 (440 aa).

Residues 7 to 26 (EFNVAIVGAGVAGLALAMAL) traverse the membrane as a helical segment. FAD is bound by residues Glu37 and Gly50. A glycan (N-linked (GlcNAc...) asparagine) is linked at Asn77. Arg122 is an FAD binding site. Catalysis depends on residues Arg203 and Tyr235. Residues Asp317 and Ala330 each contribute to the FAD site.

It belongs to the paxM FAD-dependent monooxygenase family. FAD serves as cofactor.

It localises to the membrane. In terms of biological role, FAD-dependent monooxygenase; part of the Fusarium detoxification of benzoxazolinone cluster 1 (FDB1) involved in the degradation of benzoxazolinones produced by the host plant. Maize, wheat, and rye produce the 2 benzoxazinone phytoanticipins 2,4-dihy-droxy-7-methoxy-1,4-benzoxazin-3-one (DIMBOA) and 2,4-dihydroxy-1,4-benzoxazin-3-one (DIBOA) that, due to their inherent instability once released, spontaneously degrade to the more stable corresponding benzoxazolinones, 6-methoxy-2-benzoxazolinone (MBOA) and 2-benzoxazolinone (BOA), respectively. The first step in the detoxification of benzoxazolinones involves the hydrolysis of the cyclic ester bond of benzoxazolinones by the FDB1 cluster gamma-lactamase MBL1 to aminophenols. MBL1 is able to convert BOA into 2-aminophenol (2-AP), as well as MBOA into 5-methoxy-2-aminophenol (2-AMP). The FDB2 cluster N-malonyltransferase FDB2/NAT1 then metabolizes aminophenols via N-malonylation to non-toxic malonamic acids. FDB2/NAT1 converts 2-AP into N-(2-hydroxyphenyl) malonamic acid (HPMA) and 2-AMP into N-(2-hydroxy-4-methoxyphenyl) malonamic acid (HMPMA). The duplicated dienlactone hydrolases DLH1 and DLH2 may provide redundant function for hydrolyzing the lactone moiety in the BOA molecule. The roles of the amidases an other enzymes encoded by the 2 FDB clusters have not been identified so far. This Gibberella moniliformis (strain M3125 / FGSC 7600) (Maize ear and stalk rot fungus) protein is FAD-dependent monooxygenase FVEG_08293.